The primary structure comprises 501 residues: Solute carrier family 2, facilitated glucose transporter member 5 (501 aa).

Position 1 is an N-acetylmethionine (methionine 1). At 1-18 (MEQQDQSMKEGRLTLVLA) the chain is on the cytoplasmic side. The chain crosses the membrane as a helical span at residues 19 to 39 (LATLIAAFGSSFQYGYNVAAV). Position 32 (tyrosine 32) interacts with D-fructose. At 40-68 (NSPALLMQQFYNETYYGRTGEFMEDFPLT) the chain is on the extracellular side. The N-linked (GlcNAc...) asparagine glycan is linked to asparagine 51. A helical transmembrane segment spans residues 69–91 (LLWSVTVSMFPFGGFIGSLLVGP). The Cytoplasmic segment spans residues 92 to 98 (LVNKFGR). The chain crosses the membrane as a helical span at residues 99-119 (KGALLFNNIFSIVPAILMGCS). Topologically, residues 120–126 (RVAKSFE) are extracellular. A helical transmembrane segment spans residues 127–149 (LIIISRLLVGICAGVSSNVVPMY). The Cytoplasmic portion of the chain corresponds to 150-161 (LGELAPKNLRGA). A helical membrane pass occupies residues 162 to 182 (LGVVPQLFITVGILVAQIFGL). Residue glutamine 167 participates in D-fructose binding. The Extracellular segment spans residues 183 to 192 (RNLLANVDGW). A helical transmembrane segment spans residues 193–213 (PILLGLTGVPAALQLVLLPFF). Residues 214 to 277 (PESPRYLLIQ…LFRMRSLRWQ (64 aa)) lie on the Cytoplasmic side of the membrane. A helical membrane pass occupies residues 278–298 (LLSIIVLMGGQQLSGVNAIYY). D-fructose-binding positions include glutamine 288 and 296-298 (IYY). The Extracellular portion of the chain corresponds to 299 to 313 (YADQIYLSAGVPKEH). The chain crosses the membrane as a helical span at residues 314 to 334 (VQFVTAGTGAVNVVMTFCAVF). Over 335–342 (VVELLGRR) the chain is Cytoplasmic. Residues 343–363 (LLLLLGFSICLVACCVLTAAL) traverse the membrane as a helical segment. Residues 364-371 (ALQDTVSW) are Extracellular-facing. A helical transmembrane segment spans residues 372-394 (MPYISIVCVISYVIGHALGPSPI). Histidine 387 contributes to the D-fructose binding site. Residues 395 to 412 (PALLITEIFLQSSRPSAF) lie on the Cytoplasmic side of the membrane. A helical transmembrane segment spans residues 413–433 (MVGGSVHWLSNFTVGLIFPFI). Position 419–420 (419–420 (HW)) interacts with D-fructose. Over 434–439 (QEGLGP) the chain is Extracellular. The helical transmembrane segment at 440–460 (YSFIVFAVICLLTTIYIFLIV) threads the bilayer. The Cytoplasmic segment spans residues 461–501 (PETKAKTFIEINQIFTKMNKVSEVYPEKEELKELPPVTLEQ).

This sequence belongs to the major facilitator superfamily. Sugar transporter (TC 2.A.1.1) family. Glucose transporter subfamily.

The protein localises to the apical cell membrane. It is found in the cell membrane. Its subcellular location is the sarcolemma. The enzyme catalyses D-fructose(out) = D-fructose(in). In terms of biological role, functions as a fructose transporter that has only low activity with other monosaccharides. Can mediate the uptake of deoxyglucose, but with low efficiency. Essential for fructose uptake in the small intestine. Plays a role in the regulation of salt uptake and blood pressure in response to dietary fructose. Required for the development of high blood pressure in response to high dietary fructose intake. The polypeptide is Solute carrier family 2, facilitated glucose transporter member 5 (Pongo abelii (Sumatran orangutan)).